Consider the following 96-residue polypeptide: Large ribosomal subunit protein uL23 (96 aa).

Belongs to the universal ribosomal protein uL23 family. In terms of assembly, part of the 50S ribosomal subunit. Contacts protein L29, and trigger factor when it is bound to the ribosome.

Functionally, one of the early assembly proteins it binds 23S rRNA. One of the proteins that surrounds the polypeptide exit tunnel on the outside of the ribosome. Forms the main docking site for trigger factor binding to the ribosome. The chain is Large ribosomal subunit protein uL23 from Endomicrobium trichonymphae.